Consider the following 575-residue polypeptide: Melatonin-related receptor (575 aa).

The Extracellular segment spans residues 1–30 (MGRTLAVPTPYGCIGCKLPQPDYPPALIVF). A helical membrane pass occupies residues 31–51 (MFCAMVITIVVDLIGNSMVIL). Over 52 to 64 (AVSKNKKLRNSGN) the chain is Cytoplasmic. A helical transmembrane segment spans residues 65-85 (VFVVSLSVADMLVAIYPYPLM). Residues 86–103 (LHAMAIGGWDLSKLQCQM) are Extracellular-facing. A disulfide bridge links Cys101 with Cys178. Residues 104–124 (VGFITGLSVVGSIFNIMAIAI) form a helical membrane-spanning segment. Residues 125–143 (NRYCYICHSLQYERIFSVR) lie on the Cytoplasmic side of the membrane. The helical transmembrane segment at 144-164 (NTCIYLAVTWIMTVLAVLPNM) threads the bilayer. Topologically, residues 165–188 (YIGTIEYDPRTYTCIFNYVNNPAF) are extracellular. The helical transmembrane segment at 189-209 (AVTIVCIHFVLPLLIVGFCYV) threads the bilayer. Topologically, residues 210 to 239 (KIWTKVLAARDPAGQNPDNQLAEVRNFLTM) are cytoplasmic. The chain crosses the membrane as a helical span at residues 240 to 260 (FVIFLLFAVCWCPINALTVLV). Over 261 to 273 (AVNPKEMAGKIPN) the chain is Extracellular. A helical transmembrane segment spans residues 274–294 (WVYLAAYFIAYFNSCLNAVIY). At 295–575 (GVLNENFRRE…VDADSDEMAV (281 aa)) the chain is on the cytoplasmic side. 2 disordered regions span residues 368 to 421 (VPLP…TVYP) and 446 to 474 (SSHP…TGYT). A compositionally biased stretch (polar residues) spans 455-474 (PSKTAISPATSFPKPTTGYT).

Belongs to the G-protein coupled receptor 1 family. As to quaternary structure, homodimer, and heterodimer with MTNR1A and MTNR1B. Interacts with KAT5. Interacts with RTN4 isoform A/NOGO-A. Interacts with TGFBR1.

Its subcellular location is the cell membrane. G protein-coupled receptor that plays a role in numerous physiological processes including regulation of energy metabolism, neurite outgrowth or cell migration. Promotes self-renewal and neuronal differentiation of neural progenitor cells through activation of the NOTCH and WNT/beta-catenin signaling pathways. Modulates the KAT5-dependent glucocorticoid receptor signaling by modulating KAT5 subcellular compartmentalisation. Also plays a role in the activation TGFBR1 in the absence of TGFBR2 by interfering with FKBP1A binding to TGFBR1, leading to induction of both canonical and non-canonical SMAD signaling pathways resulting in inhibition of proliferation or promotion of migration. This chain is Melatonin-related receptor (GPR50), found in Ovis aries (Sheep).